Here is a 542-residue protein sequence, read N- to C-terminus: Chaperonin GroEL (542 aa).

ATP contacts are provided by residues 29–32, 86–90, Gly413, 476–478, and Asp492; these read TMGP, DGTTT, and NAA. Residues 521-542 are disordered; sequence KPDPNANNQAPAAPQGGMGGMM. The span at 524-535 shows a compositional bias: low complexity; the sequence is PNANNQAPAAPQ.

It belongs to the chaperonin (HSP60) family. As to quaternary structure, forms a cylinder of 14 subunits composed of two heptameric rings stacked back-to-back. Interacts with the co-chaperonin GroES.

The protein resides in the cytoplasm. The catalysed reaction is ATP + H2O + a folded polypeptide = ADP + phosphate + an unfolded polypeptide.. In terms of biological role, together with its co-chaperonin GroES, plays an essential role in assisting protein folding. The GroEL-GroES system forms a nano-cage that allows encapsulation of the non-native substrate proteins and provides a physical environment optimized to promote and accelerate protein folding. This Limosilactobacillus reuteri subsp. reuteri (strain JCM 1112) (Lactobacillus reuteri) protein is Chaperonin GroEL.